Reading from the N-terminus, the 66-residue chain is Large ribosomal subunit protein uL29 (66 aa).

This sequence belongs to the universal ribosomal protein uL29 family.

The sequence is that of Large ribosomal subunit protein uL29 from Francisella tularensis subsp. holarctica (strain LVS).